The chain runs to 426 residues: Cephalotocin receptor 2 (426 aa).

The Extracellular portion of the chain corresponds to 1-51 (MYQAMEVESTSPSGFFLDFYTQSTIPTTDFLNNTNSSHPIRDEKLVKIEIA). N-linked (GlcNAc...) asparagine glycosylation is found at asparagine 32 and asparagine 35. A helical transmembrane segment spans residues 52–72 (VLGTCFTLAIINNLCVLLVLL). The Cytoplasmic segment spans residues 73–84 (WRRKKVRRMQMF). The helical transmembrane segment at 85–105 (ILHLSIADLIVAFFNILPQLI) threads the bilayer. At 106 to 120 (WDITFRFMAGDAMCR) the chain is on the extracellular side. The cysteines at positions 119 and 198 are disulfide-linked. The chain crosses the membrane as a helical span at residues 121 to 141 (FIKYAQMFSLYLSTYILIMTA). Residues 142–165 (VDRYRAICHPLSNQTWTPCMVYCK) are Cytoplasmic-facing. Residues 166–186 (IFIAYAIATIFSIPQAILFQM) form a helical membrane-spanning segment. Residues 187–208 (QEVNEGSGIYDCWVHFEPAWVL) lie on the Extracellular side of the membrane. A helical transmembrane segment spans residues 209 to 229 (TAYALYIFFALYLIPILILFF). Topologically, residues 230-288 (TYGSICYTIWAKYRHAIKTKKDANTRYPQRRKKKGVILRTHSVHGFSKAKLNSVKLTFA) are cytoplasmic. Residues 289 to 309 (VIVTYIICWSPFFVSQIWWLF) traverse the membrane as a helical segment. Residues 310–319 (DETVVGNAGV) are Extracellular-facing. A helical transmembrane segment spans residues 320–340 (VVILLMACLNSCTNPWIYLIF). The Cytoplasmic segment spans residues 341-426 (NRNYISNVLP…DQFIYSDKTT (86 aa)). Positions 373–426 (GSVRRDSRKTSDPKRISESRRISDARRISGKTQKNNSSSPRKTSDQFIYSDKTT) are disordered. Residues 375 to 399 (VRRDSRKTSDPKRISESRRISDARR) show a composition bias toward basic and acidic residues. The segment covering 402–426 (GKTQKNNSSSPRKTSDQFIYSDKTT) has biased composition (polar residues).

The protein belongs to the G-protein coupled receptor 1 family. Vasopressin/oxytocin receptor subfamily. In terms of tissue distribution, present in various peripheral tissues with highest expression in branchia and vas deferens. Very low expression detected in nervous system.

It is found in the cell membrane. Acts as a receptor for cephalotocin. This chain is Cephalotocin receptor 2, found in Octopus vulgaris (Common octopus).